A 335-amino-acid chain; its full sequence is MLP-like protein 28 (335 aa).

It belongs to the MLP family.

In terms of biological role, can bind steroids (in vitro), and may also bind other types of hydrophobic ligands. The protein is MLP-like protein 28 (MLP28) of Arabidopsis thaliana (Mouse-ear cress).